Here is a 307-residue protein sequence, read N- to C-terminus: tRNA dimethylallyltransferase (307 aa).

An ATP-binding site is contributed by 7–14 (GPTAGGKT). 9–14 (TAGGKT) serves as a coordination point for substrate. The interaction with substrate tRNA stretch occupies residues 32 to 35 (DSRQ).

It belongs to the IPP transferase family. As to quaternary structure, monomer. Mg(2+) is required as a cofactor.

It catalyses the reaction adenosine(37) in tRNA + dimethylallyl diphosphate = N(6)-dimethylallyladenosine(37) in tRNA + diphosphate. In terms of biological role, catalyzes the transfer of a dimethylallyl group onto the adenine at position 37 in tRNAs that read codons beginning with uridine, leading to the formation of N6-(dimethylallyl)adenosine (i(6)A). The sequence is that of tRNA dimethylallyltransferase from Elusimicrobium minutum (strain Pei191).